The sequence spans 360 residues: Chorismate synthase (360 aa).

Position 47 (Arg47) interacts with NADP(+). FMN-binding positions include 124 to 126 (RAS), Gly286, 301 to 305 (KPTAT), and Arg327.

This sequence belongs to the chorismate synthase family. In terms of assembly, homotetramer. Requires FMNH2 as cofactor.

It carries out the reaction 5-O-(1-carboxyvinyl)-3-phosphoshikimate = chorismate + phosphate. The protein operates within metabolic intermediate biosynthesis; chorismate biosynthesis; chorismate from D-erythrose 4-phosphate and phosphoenolpyruvate: step 7/7. Catalyzes the anti-1,4-elimination of the C-3 phosphate and the C-6 proR hydrogen from 5-enolpyruvylshikimate-3-phosphate (EPSP) to yield chorismate, which is the branch point compound that serves as the starting substrate for the three terminal pathways of aromatic amino acid biosynthesis. This reaction introduces a second double bond into the aromatic ring system. This is Chorismate synthase from Synechococcus sp. (strain RCC307).